The following is a 683-amino-acid chain: Dynein, 78 kDa intermediate chain, flagellar outer arm (683 aa).

Positions 1–42 are disordered; the sequence is MPALSPAKKGTDKGKTGKKTGKQEQNAQDYIPPPPPMPGDEA. 4 WD repeats span residues 358–398, 407–450, 562–602, and 608–647; these read HTES…DEPI, KLND…LIPE, DLND…LLPL, and VKKAKLTKLVFNPKHPIVLVGDDKGCVTSLKLSPNLRITS.

This sequence belongs to the dynein intermediate chain family. As to quaternary structure, consists of at least 3 heavy chains (alpha, beta and gamma), 2 intermediate chains and 8 light chains.

It is found in the cytoplasm. It localises to the cytoskeleton. The protein resides in the flagellum axoneme. Functionally, is essential for arm assembly or attachment to the outer doublet microtubule. The sequence is that of Dynein, 78 kDa intermediate chain, flagellar outer arm (ODA9) from Chlamydomonas reinhardtii (Chlamydomonas smithii).